The primary structure comprises 402 residues: MATQASVEWIFNVAGSAASASLAKSIKDAGGSEDFAKYVVARFYDNYKDSIDDSGIYNACMGRARTVDKALNDSRLAERNEEWHTNLATIRRLDLELAELKLMLSNLGMKREERVLNSMFSVTREEGRSSNVVMLKQNAVKMIEEGKLKIKVEKNENYTESLKNKIEELECIIGAFEKGKEINIALDAMTGEVRLDGDSCSYNSTAAFVSTIMGTPIKMYDESNKPLFDVGKYINPKHVIDKMIESEIPIFKSDYRNNESPDFDAWNENSNLKIVSVNDCHAICVFKFENEWWCFDDGRLRKYNGIGNPLIVANSKFQIDRILISGDIELNPGPNALVKLNDCITKYNLKIICTFDVNLDDDGSIMYICYLKVGSAEATGNGCSKKEAKRRAAVSILDQLGM.

Coiled coils occupy residues 87-113 and 147-181; these read LATIRRLDLELAELKLMLSNLGMKREE and KLKIKVEKNENYTESLKNKIEELECIIGAFEKGKE. A DRBM domain is found at 334-402; that stretch reads PNALVKLNDC…AVSILDQLGM (69 aa).

Belongs to the rotavirus NSP3 family.

The protein resides in the host cytoplasm. Its function is as follows. May play a role in stimulating the translation of viral mRNAs. The polypeptide is Non-structural protein 3 (Bos taurus (Bovine)).